The following is a 130-amino-acid chain: UPF0251 protein MmarC6_0272 (130 aa).

This sequence belongs to the UPF0251 family.

This Methanococcus maripaludis (strain C6 / ATCC BAA-1332) protein is UPF0251 protein MmarC6_0272.